The primary structure comprises 478 residues: Protein nucleotidyltransferase YdiU (478 aa).

Residues Gly84, Gly86, Arg87, Lys107, Asp119, Gly120, Arg170, and Arg177 each contribute to the ATP site. Asp246 acts as the Proton acceptor in catalysis. Mg(2+) is bound by residues Asn247 and Asp256. Asp256 contacts ATP.

It belongs to the SELO family. The cofactor is Mg(2+). Mn(2+) serves as cofactor.

It catalyses the reaction L-seryl-[protein] + ATP = 3-O-(5'-adenylyl)-L-seryl-[protein] + diphosphate. The catalysed reaction is L-threonyl-[protein] + ATP = 3-O-(5'-adenylyl)-L-threonyl-[protein] + diphosphate. The enzyme catalyses L-tyrosyl-[protein] + ATP = O-(5'-adenylyl)-L-tyrosyl-[protein] + diphosphate. It carries out the reaction L-histidyl-[protein] + UTP = N(tele)-(5'-uridylyl)-L-histidyl-[protein] + diphosphate. It catalyses the reaction L-seryl-[protein] + UTP = O-(5'-uridylyl)-L-seryl-[protein] + diphosphate. The catalysed reaction is L-tyrosyl-[protein] + UTP = O-(5'-uridylyl)-L-tyrosyl-[protein] + diphosphate. Nucleotidyltransferase involved in the post-translational modification of proteins. It can catalyze the addition of adenosine monophosphate (AMP) or uridine monophosphate (UMP) to a protein, resulting in modifications known as AMPylation and UMPylation. The sequence is that of Protein nucleotidyltransferase YdiU from Escherichia coli O6:K15:H31 (strain 536 / UPEC).